A 316-amino-acid chain; its full sequence is Calumenin-B (316 aa).

The signal sequence occupies residues 1–19 (MELRPLVMCFALCVVYASS). EF-hand domains lie at 69–104 (ESKERLGMLVERIDEDKDGYVSVEEMKKWIKHSQKR), 105–140 (WIYDDVDRQWKGHDHNGDGLVSWEEYKNATYGYILD), 152–187 (QMISRDERRFKMSDLDADLKANKEEFTAFLHPEEYD), 189–224 (MKDIVVLETMEDIDKNGDGFIDLEEYIGDMYNQEGD), 230–265 (WVRTEREQFTEFRDTNKDGRMDKEETKDWILPSDYD), and 266–301 (HAEAEAKHLVYESDNDKDGKLTKAEIVEKYDLFVGS). 9 residues coordinate Ca(2+): aspartate 82, aspartate 84, aspartate 86, tyrosine 88, glutamate 93, aspartate 118, asparagine 120, aspartate 122, and glutamate 129. The N-linked (GlcNAc...) asparagine glycan is linked to asparagine 132. Ca(2+)-binding residues include aspartate 165, aspartate 167, aspartate 169, lysine 171, glutamate 176, aspartate 202, asparagine 204, aspartate 206, glutamate 213, aspartate 243, asparagine 245, aspartate 247, arginine 249, glutamate 254, aspartate 279, aspartate 281, aspartate 283, lysine 285, and glutamate 290. The Prevents secretion from ER signature appears at 313-316 (HDEF).

This sequence belongs to the CREC family. In terms of assembly, interacts with ggcx.

The protein resides in the endoplasmic reticulum membrane. The protein localises to the golgi apparatus. It localises to the secreted. It is found in the melanosome. Its subcellular location is the sarcoplasmic reticulum lumen. In terms of biological role, involved in regulation of vitamin K-dependent carboxylation of multiple N-terminal glutamate residues. Seems to inhibit gamma-carboxylase ggcx. Binds 7 calcium ions with a low affinity. The protein is Calumenin-B (calub) of Salmo salar (Atlantic salmon).